The following is a 127-amino-acid chain: Protein ApaG (127 aa).

In terms of domain architecture, ApaG spans 3–127 (DDPRYRVEVE…FVLSVPRTLH (125 aa)).

The chain is Protein ApaG from Xanthomonas axonopodis pv. citri (strain 306).